Reading from the N-terminus, the 201-residue chain is ADP-ribosylation factor-like protein 4D (201 aa).

Residue G2 is the site of N-myristoyl glycine attachment. GTP is bound by residues 28–35 (GLDSAGKT), 76–80 (DVGGQ), and 135–138 (NKQD).

This sequence belongs to the small GTPase superfamily. Arf family. As to quaternary structure, interacts with CYTH2; the interaction is direct and ARL4D GTP-dependent. Does not interact with ARL4D.

It localises to the nucleus. The protein resides in the nucleolus. Its subcellular location is the cell membrane. It is found in the cytoplasm. In terms of biological role, small GTP-binding protein which cycles between an inactive GDP-bound and an active GTP-bound form, and the rate of cycling is regulated by guanine nucleotide exchange factors (GEF) and GTPase-activating proteins (GAP). GTP-binding protein that does not act as an allosteric activator of the cholera toxin catalytic subunit. Recruits CYTH1, CYTH2, CYTH3 and CYTH4 to the plasma membrane in GDP-bound form. The polypeptide is ADP-ribosylation factor-like protein 4D (ARL4D) (Homo sapiens (Human)).